A 363-amino-acid chain; its full sequence is mRNA decay activator protein ZFP36L2-A (363 aa).

The short motif at 131 to 136 is the RNA-binding element; the sequence is RYKTEL. 2 consecutive C3H1-type zinc fingers follow at residues 131–159 and 169–197; these read RYKTELCRPFEESGACKYGEKCQFAHGFH and KYKTELCRTFHTIGFCPYGPRCHFIHNAE. The segment at 148 to 189 is RNA-binding; the sequence is YGEKCQFAHGFHELRSLTRHPKYKTELCRTFHTIGFCPYGPR. The segment at 308–349 is disordered; sequence ESPVFDAPPSPPDSLSDRDSYLSGSLSSGSLSGSDSPTLDSN. Residues 328-347 show a composition bias toward low complexity; that stretch reads YLSGSLSSGSLSGSDSPTLD.

Phosphorylated. Widely expressed in adults.

Its subcellular location is the nucleus. The protein resides in the cytoplasm. Its function is as follows. Zinc-finger RNA-binding protein that destabilizes several cytoplasmic AU-rich element (ARE)-containing mRNA transcripts by promoting their poly(A) tail removal or deadenylation, and hence provide a mechanism for attenuating protein synthesis. Acts as a 3'-untranslated region (UTR) ARE mRNA-binding adapter protein to communicate signaling events to the mRNA decay machinery. Functions by recruiting the CCR4-NOT deadenylase complex and probably other components of the cytoplasmic RNA decay machinery to the bound ARE-containing mRNAs, and hence promotes ARE-mediated mRNA deadenylation and decay processes. Binds to 3'-UTR ARE of numerous mRNAs. Also induces the degradation of ARE-containing mRNAs even in absence of poly(A) tail. Required for tubulogenesis during pronephros development. This Xenopus laevis (African clawed frog) protein is mRNA decay activator protein ZFP36L2-A (zfp36l2-A).